Here is a 91-residue protein sequence, read N- to C-terminus: Large ribosomal subunit protein uL23c (91 aa).

Belongs to the universal ribosomal protein uL23 family. As to quaternary structure, part of the 50S ribosomal subunit.

It localises to the plastid. It is found in the chloroplast. Its function is as follows. Binds to 23S rRNA. The protein is Large ribosomal subunit protein uL23c (rpl23) of Anthoceros angustus (Hornwort).